We begin with the raw amino-acid sequence, 67 residues long: MGEISITKLLVIAALVVLLFGTKKLRTLGGDLGAAIKGFKKAMNDDDTGAKTPAASEAPAERLSHKE.

The helical transmembrane segment at 4–21 (ISITKLLVIAALVVLLFG) threads the bilayer. Residues 44–67 (NDDDTGAKTPAASEAPAERLSHKE) are disordered.

This sequence belongs to the TatA/E family. TatE subfamily.

Its subcellular location is the cell inner membrane. Functionally, part of the twin-arginine translocation (Tat) system that transports large folded proteins containing a characteristic twin-arginine motif in their signal peptide across membranes. TatE shares overlapping functions with TatA. The protein is Probable Sec-independent protein translocase protein TatE of Cronobacter sakazakii (strain ATCC BAA-894) (Enterobacter sakazakii).